Reading from the N-terminus, the 342-residue chain is MIKVGIVGGTGYTGVELLRLLARHPEVELKAITSRKEAGMPVADMFPNLRGRVGLAFSTPEEAGLETCDVVFFATPNGVAMQQTRALLDAGVKVIDLAADFRIKDVAEWQKWYKMEHACPDLVDEAVYGLPEINRDKIKAARLIANPGCYPTAVQLGFLPLLEAGVAETGTLIADAKSGVSGAGRKAETHILFAEAADNFKAYAVGGHRHWPEIKQGLEIFAGGPVGFTFVPHLTPLIRGIHATLYARVSADVDLQALYEKRYTDEAFVDVMPAGACPETRSVRGANVCRIAVHRQQGSDMVIVLSVIDNLVKGAAGQAVQNMNILFGLAEDTALSDVGMLP.

Residue cysteine 149 is part of the active site.

This sequence belongs to the NAGSA dehydrogenase family. Type 1 subfamily.

It is found in the cytoplasm. It carries out the reaction N-acetyl-L-glutamate 5-semialdehyde + phosphate + NADP(+) = N-acetyl-L-glutamyl 5-phosphate + NADPH + H(+). The protein operates within amino-acid biosynthesis; L-arginine biosynthesis; N(2)-acetyl-L-ornithine from L-glutamate: step 3/4. Functionally, catalyzes the NADPH-dependent reduction of N-acetyl-5-glutamyl phosphate to yield N-acetyl-L-glutamate 5-semialdehyde. This chain is N-acetyl-gamma-glutamyl-phosphate reductase, found in Thiobacillus denitrificans (strain ATCC 25259 / T1).